The sequence spans 841 residues: Protein translocase subunit SecA (841 aa).

Residues glutamine 87, 105–109 (GEGKT), and aspartate 494 each bind ATP. Zn(2+)-binding residues include cysteine 825, cysteine 827, cysteine 836, and cysteine 837.

It belongs to the SecA family. In terms of assembly, monomer and homodimer. Part of the essential Sec protein translocation apparatus which comprises SecA, SecYEG and auxiliary proteins SecDF-YajC and YidC. It depends on Zn(2+) as a cofactor.

The protein localises to the cell inner membrane. Its subcellular location is the cytoplasm. It catalyses the reaction ATP + H2O + cellular proteinSide 1 = ADP + phosphate + cellular proteinSide 2.. Its function is as follows. Part of the Sec protein translocase complex. Interacts with the SecYEG preprotein conducting channel. Has a central role in coupling the hydrolysis of ATP to the transfer of proteins into and across the cell membrane, serving as an ATP-driven molecular motor driving the stepwise translocation of polypeptide chains across the membrane. This is Protein translocase subunit SecA from Syntrophus aciditrophicus (strain SB).